Reading from the N-terminus, the 82-residue chain is ATP synthase subunit c (82 aa).

2 helical membrane-spanning segments follow: residues 7 to 27 (AASVVAAGLAVGLGAIGPGIG) and 57 to 77 (FAFMESLTIYGLVVALVLLFA).

The protein belongs to the ATPase C chain family. As to quaternary structure, F-type ATPases have 2 components, F(1) - the catalytic core - and F(0) - the membrane proton channel. F(1) has five subunits: alpha(3), beta(3), gamma(1), delta(1), epsilon(1). F(0) has four main subunits: a(1), b(1), b'(1) and c(10-14). The alpha and beta chains form an alternating ring which encloses part of the gamma chain. F(1) is attached to F(0) by a central stalk formed by the gamma and epsilon chains, while a peripheral stalk is formed by the delta, b and b' chains.

Its subcellular location is the cellular thylakoid membrane. In terms of biological role, f(1)F(0) ATP synthase produces ATP from ADP in the presence of a proton or sodium gradient. F-type ATPases consist of two structural domains, F(1) containing the extramembraneous catalytic core and F(0) containing the membrane proton channel, linked together by a central stalk and a peripheral stalk. During catalysis, ATP synthesis in the catalytic domain of F(1) is coupled via a rotary mechanism of the central stalk subunits to proton translocation. Its function is as follows. Key component of the F(0) channel; it plays a direct role in translocation across the membrane. A homomeric c-ring of between 10-14 subunits forms the central stalk rotor element with the F(1) delta and epsilon subunits. This Prochlorococcus marinus (strain MIT 9303) protein is ATP synthase subunit c.